The chain runs to 116 residues: NADPH-dependent 7-cyano-7-deazaguanine reductase (116 aa).

Cys31 (thioimide intermediate) is an active-site residue. Catalysis depends on Asp38, which acts as the Proton donor. Residues Val53–Leu55 and Tyr72–Glu73 each bind substrate.

It belongs to the GTP cyclohydrolase I family. QueF type 1 subfamily.

Its subcellular location is the cytoplasm. It carries out the reaction 7-aminomethyl-7-carbaguanine + 2 NADP(+) = 7-cyano-7-deazaguanine + 2 NADPH + 3 H(+). The protein operates within tRNA modification; tRNA-queuosine biosynthesis. In terms of biological role, catalyzes the NADPH-dependent reduction of 7-cyano-7-deazaguanine (preQ0) to 7-aminomethyl-7-deazaguanine (preQ1). The protein is NADPH-dependent 7-cyano-7-deazaguanine reductase of Chlorobium phaeobacteroides (strain DSM 266 / SMG 266 / 2430).